Consider the following 312-residue polypeptide: Ribosomal RNA small subunit methyltransferase H (312 aa).

S-adenosyl-L-methionine contacts are provided by residues 33–35 (AGH), Asp52, Phe79, Asp100, and Gln107.

This sequence belongs to the methyltransferase superfamily. RsmH family.

Its subcellular location is the cytoplasm. It catalyses the reaction cytidine(1402) in 16S rRNA + S-adenosyl-L-methionine = N(4)-methylcytidine(1402) in 16S rRNA + S-adenosyl-L-homocysteine + H(+). In terms of biological role, specifically methylates the N4 position of cytidine in position 1402 (C1402) of 16S rRNA. The protein is Ribosomal RNA small subunit methyltransferase H of Finegoldia magna (strain ATCC 29328 / DSM 20472 / WAL 2508) (Peptostreptococcus magnus).